A 751-amino-acid polypeptide reads, in one-letter code: Transposable element P transposase (751 aa).

The segment at 1 to 77 adopts a THAP-type zinc-finger fold; that stretch reads MKYCKFCCKA…LNADAVPSKV (77 aa).

In terms of biological role, P-element transposase that specifically mediates transposition of P-elements. Mediates both; precise and imprecise excision. This Drosophila melanogaster (Fruit fly) protein is Transposable element P transposase.